A 306-amino-acid polypeptide reads, in one-letter code: Tyrosine recombinase XerC (306 aa).

Positions 6–92 (NTLYLQTKPY…ALRQWFSYLI (87 aa)) constitute a Core-binding (CB) domain. The Tyr recombinase domain occupies 113–292 (RLPKNIDAEQ…DFQHLAKIYD (180 aa)). Residues R152, K176, H244, R247, and H270 contribute to the active site. Y279 acts as the O-(3'-phospho-DNA)-tyrosine intermediate in catalysis.

Belongs to the 'phage' integrase family. XerC subfamily. In terms of assembly, forms a cyclic heterotetrameric complex composed of two molecules of XerC and two molecules of XerD.

It localises to the cytoplasm. Its function is as follows. Site-specific tyrosine recombinase, which acts by catalyzing the cutting and rejoining of the recombining DNA molecules. The XerC-XerD complex is essential to convert dimers of the bacterial chromosome into monomers to permit their segregation at cell division. It also contributes to the segregational stability of plasmids. This is Tyrosine recombinase XerC from Actinobacillus pleuropneumoniae serotype 7 (strain AP76).